Reading from the N-terminus, the 180-residue chain is MASSLIFLLLVTLTFSASTLISAKSNTTTIIESTCKTTNYYKFCVSALKSDPRSPTADTKGLASIMVGVGMTNATSTANYIAGNLSATVKDTVLKKVLQDCSEKYALAADSLRLTIQDLDDEAYDYASMHVLAAQDYPNVCRNIFRRVKGLAYPVEIRRREASLRRICGVVSGILDRLVE.

The N-terminal stretch at 1–23 (MASSLIFLLLVTLTFSASTLISA) is a signal peptide. N26 carries an N-linked (GlcNAc...) asparagine glycan. C35 and C44 are oxidised to a cystine. N-linked (GlcNAc...) asparagine glycosylation is found at N73 and N84. A disulfide bridge connects residues C101 and C141.

Belongs to the PMEI family. Mostly expressed at low levels in seedlings, stems, leaves and flowers (in all organs), and, to a lower extent, in roots and siliques.

It localises to the vacuole. In terms of biological role, inhibits fructosidases from both cell wall (cell wall invertase CWI) and vacuoles (vacuolar invertase VI). The sequence is that of Cell wall / vacuolar inhibitor of fructosidase 2 (C/VIF2) from Arabidopsis thaliana (Mouse-ear cress).